Reading from the N-terminus, the 75-residue chain is ATP synthase subunit c (75 aa).

2 helical membrane-spanning segments follow: residues 8–28 (FLGI…VSNI) and 54–74 (AALT…LIFV).

The protein belongs to the ATPase C chain family. In terms of assembly, F-type ATPases have 2 components, F(1) - the catalytic core - and F(0) - the membrane proton channel. F(1) has five subunits: alpha(3), beta(3), gamma(1), delta(1), epsilon(1). F(0) has three main subunits: a(1), b(2) and c(10-14). The alpha and beta chains form an alternating ring which encloses part of the gamma chain. F(1) is attached to F(0) by a central stalk formed by the gamma and epsilon chains, while a peripheral stalk is formed by the delta and b chains.

It is found in the cell inner membrane. In terms of biological role, f(1)F(0) ATP synthase produces ATP from ADP in the presence of a proton or sodium gradient. F-type ATPases consist of two structural domains, F(1) containing the extramembraneous catalytic core and F(0) containing the membrane proton channel, linked together by a central stalk and a peripheral stalk. During catalysis, ATP synthesis in the catalytic domain of F(1) is coupled via a rotary mechanism of the central stalk subunits to proton translocation. Its function is as follows. Key component of the F(0) channel; it plays a direct role in translocation across the membrane. A homomeric c-ring of between 10-14 subunits forms the central stalk rotor element with the F(1) delta and epsilon subunits. This chain is ATP synthase subunit c, found in Neorickettsia sennetsu (strain ATCC VR-367 / Miyayama) (Ehrlichia sennetsu).